A 302-amino-acid chain; its full sequence is Protein FLOURY 1 (302 aa).

A run of 2 helical transmembrane segments spans residues 27-47 (SAGA…VAVL) and 82-102 (LAGS…FLAV). The segment at 160–195 (SSKPVSRSLAAEFDQEADGEEEDNAGETSDPDDGSV) is disordered. The segment covering 172–192 (FDQEADGEEEDNAGETSDPDD) has biased composition (acidic residues). Residues 193 to 299 (GSVQYLRRRL…ALSETSEDDR (107 aa)) enclose the GTD-binding domain. Positions 199–254 (RRRLKEEMLLKEVALEELEKERHAAASAADEAMSKIACLRSEKALVEREARQFQEM) form a coiled coil. The interval 283–302 (PEAITDRALSETSEDDRDKK) is disordered.

Interacts (via C-terminus) with both 22 kDa and 19 kDa alpha-zeins. Interacts (via C-terminus) with OP10 (via N-terminus). As to expression, expressed in endosperm. Not detected in embryo, leaves and roots.

It is found in the endoplasmic reticulum membrane. Involved in protein body development and 22 kDa alpha-zein localization. The sequence is that of Protein FLOURY 1 from Zea mays (Maize).